Reading from the N-terminus, the 452-residue chain is Pup--protein ligase (452 aa).

Glu9 is a binding site for Mg(2+). Position 53 (Arg53) interacts with ATP. Residue Tyr55 coordinates Mg(2+). Asp57 (proton acceptor) is an active-site residue. Glu63 provides a ligand contact to Mg(2+). ATP contacts are provided by Thr66 and Trp419.

Belongs to the Pup ligase/Pup deamidase family. Pup-conjugating enzyme subfamily.

The catalysed reaction is ATP + [prokaryotic ubiquitin-like protein]-L-glutamate + [protein]-L-lysine = ADP + phosphate + N(6)-([prokaryotic ubiquitin-like protein]-gamma-L-glutamyl)-[protein]-L-lysine.. It participates in protein degradation; proteasomal Pup-dependent pathway. It functions in the pathway protein modification; protein pupylation. Its function is as follows. Catalyzes the covalent attachment of the prokaryotic ubiquitin-like protein modifier Pup to the proteasomal substrate proteins, thereby targeting them for proteasomal degradation. This tagging system is termed pupylation. The ligation reaction involves the side-chain carboxylate of the C-terminal glutamate of Pup and the side-chain amino group of a substrate lysine. The protein is Pup--protein ligase of Mycobacterium tuberculosis (strain KZN 1435 / MDR).